Consider the following 217-residue polypeptide: MOB kinase activator 3A (217 aa).

Zn(2+) contacts are provided by C83, C88, H165, and H170.

This sequence belongs to the MOB1/phocein family.

In terms of biological role, may regulate the activity of kinases. The polypeptide is MOB kinase activator 3A (MOB3A) (Bos taurus (Bovine)).